The chain runs to 337 residues: Cobalt-precorrin-5B C(1)-methyltransferase (337 aa).

It belongs to the CbiD family.

It catalyses the reaction Co-precorrin-5B + S-adenosyl-L-methionine = Co-precorrin-6A + S-adenosyl-L-homocysteine. Its pathway is cofactor biosynthesis; adenosylcobalamin biosynthesis; cob(II)yrinate a,c-diamide from sirohydrochlorin (anaerobic route): step 6/10. Its function is as follows. Catalyzes the methylation of C-1 in cobalt-precorrin-5B to form cobalt-precorrin-6A. The protein is Cobalt-precorrin-5B C(1)-methyltransferase of Methanoculleus marisnigri (strain ATCC 35101 / DSM 1498 / JR1).